A 229-amino-acid chain; its full sequence is MSAEGHKLRGSCHACAASKVRCSKEKPTCSRCSKRGTTCEYLITKRPGRKQLNNRSTAKESSNTTRTSLATVPQGLLEPDPMSTAIPLADQPPWSPPGTTPSSLDVFSSLFDSAEGSWSLPLADWDNEVDEYLTHLAMPRTANSEPLDAEGGITSSHNTSSNSPARPPTLQPVCPQLTCVAQSTFPAPGQCRGTSPTLVLYLSQQCAGSVEAADHQRSAGRLHIRRPAR.

Residues 12 to 39 constitute a DNA-binding region (zn(2)-C6 fungal-type); it reads CHACAASKVRCSKEKPTCSRCSKRGTTC. 2 disordered regions span residues 50–100 and 141–169; these read KQLN…PGTT and TANSEPLDAEGGITSSHNTSSNSPARPPT. 2 stretches are compositionally biased toward polar residues: residues 51–71 and 153–164; these read QLNNRSTAKESSNTTRTSLAT and ITSSHNTSSNSP.

It is found in the nucleus. Its function is as follows. Transcription factor that regulates the expression of the gene cluster that mediates the biosynthesis of geodin, an intermediate in the biosynthesis of other natural products. The polypeptide is Geodin cluster transcription factor (Aspergillus terreus (strain NIH 2624 / FGSC A1156)).